The sequence spans 211 residues: Methylthioribulose-1-phosphate dehydratase (211 aa).

Zn(2+)-binding residues include histidine 97 and histidine 99.

It belongs to the aldolase class II family. MtnB subfamily. Homotetramer. The cofactor is Zn(2+).

It carries out the reaction 5-(methylsulfanyl)-D-ribulose 1-phosphate = 5-methylsulfanyl-2,3-dioxopentyl phosphate + H2O. The protein operates within amino-acid biosynthesis; L-methionine biosynthesis via salvage pathway; L-methionine from S-methyl-5-thio-alpha-D-ribose 1-phosphate: step 2/6. Functionally, catalyzes the dehydration of methylthioribulose-1-phosphate (MTRu-1-P) into 2,3-diketo-5-methylthiopentyl-1-phosphate (DK-MTP-1-P). The chain is Methylthioribulose-1-phosphate dehydratase from Geobacillus thermodenitrificans (strain NG80-2).